Here is a 114-residue protein sequence, read N- to C-terminus: Hydrogenase maturation factor HypA (114 aa).

Position 2 (His-2) interacts with Ni(2+). Zn(2+) is bound by residues Cys-73, Cys-76, Cys-89, and Cys-92.

Belongs to the HypA/HybF family.

In terms of biological role, involved in the maturation of [NiFe] hydrogenases. Required for nickel insertion into the metal center of the hydrogenase. The sequence is that of Hydrogenase maturation factor HypA from Psychromonas ingrahamii (strain DSM 17664 / CCUG 51855 / 37).